Here is a 662-residue protein sequence, read N- to C-terminus: A-kinase anchor protein 10, mitochondrial (662 aa).

The transit peptide at Met1–Arg28 directs the protein to the mitochondrion. A disordered region spans residues Met1–Lys55. A compositionally biased stretch (basic and acidic residues) spans Gly32–Ser43. Residues Ser52 and Ser189 each carry the phosphoserine modification. RGS domains lie at Thr125–Gln369 and Tyr379–Leu505. The span at Ser261 to Ala280 shows a compositional bias: polar residues. The segment at Ser261–Pro282 is disordered. Residue Ser281 is modified to Phosphoserine. The tract at residues Leu524–Ser548 is disordered. The interval Leu634–Met647 is PKA-RII subunit binding.

The protein localises to the mitochondrion. Its subcellular location is the membrane. The protein resides in the cytoplasm. Functionally, differentially targeted protein that binds to type I and II regulatory subunits of protein kinase A and anchors them to the mitochondria or the plasma membrane. Although the physiological relevance between PKA and AKAPS with mitochondria is not fully understood, one idea is that BAD, a proapoptotic member, is phosphorylated and inactivated by mitochondria-anchored PKA. It cannot be excluded too that it may facilitate PKA as well as G protein signal transduction, by acting as an adapter for assembling multiprotein complexes. With its RGS domain, it could lead to the interaction to G-alpha proteins, providing a link between the signaling machinery and the downstream kinase. This Homo sapiens (Human) protein is A-kinase anchor protein 10, mitochondrial (AKAP10).